We begin with the raw amino-acid sequence, 321 residues long: Bifunctional ligase/repressor BirA (321 aa).

The H-T-H motif DNA-binding region spans 22–41 (GEQLGETLGMSRAAINKHIQ). The BPL/LPL catalytic domain occupies 67 to 254 (LNAKQILGQL…ELRAALELFE (188 aa)). Residues 89–91 (STN), Gln-112, 116–118 (RGR), and Lys-183 contribute to the biotin site.

This sequence belongs to the biotin--protein ligase family. As to quaternary structure, monomer in solution. Interacts with BCCP. Homodimerizes to bind DNA. Interaction with the corepressor bio-5'-AMP increases dimerization.

The catalysed reaction is biotin + L-lysyl-[protein] + ATP = N(6)-biotinyl-L-lysyl-[protein] + AMP + diphosphate + H(+). With respect to regulation, the switch between the enzymatic activity and the repressor activity is regulated by cellular demand for biotin. The switch occurs by swapping of protein interaction partners by holoBirA. In conditions of high biotin demand, holoBirA associates with apoBCCP to transfer biotin. In conditions of low biotin demand, holoBirA dimerizes, binds DNA and represses transcription of the biotin operon. Its function is as follows. Acts both as a biotin--[acetyl-CoA-carboxylase] ligase and a biotin-operon repressor. In the presence of ATP, BirA activates biotin to form the BirA-biotinyl-5'-adenylate (BirA-bio-5'-AMP or holoBirA) complex. HoloBirA can either transfer the biotinyl moiety to the biotin carboxyl carrier protein (BCCP) subunit of acetyl-CoA carboxylase, or bind to the biotin operator site and inhibit transcription of the operon. In Escherichia coli (strain K12), this protein is Bifunctional ligase/repressor BirA.